Reading from the N-terminus, the 351-residue chain is Formyl peptide receptor 2 (351 aa).

The Extracellular portion of the chain corresponds to Met-1–Ser-29. Asn-4 and Asn-10 each carry an N-linked (GlcNAc...) asparagine glycan. A helical membrane pass occupies residues Met-30–Val-50. Topologically, residues Ala-51–Thr-61 are cytoplasmic. A helical membrane pass occupies residues Ile-62–Leu-82. Residues Val-83–Lys-99 lie on the Extracellular side of the membrane. The cysteines at positions 98 and 176 are disulfide-linked. The chain crosses the membrane as a helical span at residues Leu-100 to Ala-120. At Leu-121–Lys-144 the chain is on the cytoplasmic side. The chain crosses the membrane as a helical span at residues Val-145–Thr-165. Residues Thr-166–Arg-205 lie on the Extracellular side of the membrane. The chain crosses the membrane as a helical span at residues Phe-206 to Val-226. Over Lys-227–Arg-241 the chain is Cytoplasmic. A helical membrane pass occupies residues Val-242–Leu-262. Over Leu-263–Met-282 the chain is Extracellular. The chain crosses the membrane as a helical span at residues Phe-283–Met-305. Residues Gly-306 to Pro-351 are Cytoplasmic-facing. Residues Leu-325 to Pro-351 are disordered. Positions Glu-327–Ser-341 are enriched in low complexity.

Belongs to the G-protein coupled receptor 1 family. Interacts with Amyloid-beta protein 42, product of APP; the interaction takes place at the cell surface and the complex is then rapidly internalized. In terms of tissue distribution, primarily expressed in neutrophils. Not detected in vomeronasal neurons.

The protein resides in the cell membrane. Its function is as follows. High affinity receptor for N-formyl-methionyl peptides (FMLP), which are powerful neutrophil chemotactic factors. Stimulates chemotaxis in immune cells to site of infection or tissue damage upon recognition of several ligands, such as FMLP, or ligand involved in cell damage, disease or inflammation. Receptor for the chemokine-like protein FAM19A5, mediating FAM19A5-stimulated macrophage chemotaxis and the inhibitory effect on TNFSF11/RANKL-induced osteoclast differentiation. This is Formyl peptide receptor 2 (Fpr2) from Mus musculus (Mouse).